The following is a 334-amino-acid chain: Methionine adenosyltransferase 2 subunit beta (334 aa).

NADP(+) is bound by residues 37-40 (TGLL), 60-62 (FRR), 71-72 (NL), C93, R97, Y159, and L185. T309 carries the post-translational modification Phosphothreonine. The segment at 319-334 (LWPFLIDKRWRQTVFH) is required for interaction with MAT2A.

This sequence belongs to the dTDP-4-dehydrorhamnose reductase family. MAT2B subfamily. In terms of assembly, heterotrimer; composed of a catalytic MAT2A homodimer that binds one regulatory MAT2B chain. Heterohexamer; composed of a central, catalytic MAT2A homotetramer flanked on either side by a regulatory MAT2B chain. NADP binding increases the affinity for MAT2A.

It participates in amino-acid biosynthesis; S-adenosyl-L-methionine biosynthesis; S-adenosyl-L-methionine from L-methionine: step 1/1. Functionally, regulatory subunit of S-adenosylmethionine synthetase 2, an enzyme that catalyzes the formation of S-adenosylmethionine from methionine and ATP. Regulates MAT2A catalytic activity by changing its kinetic properties, increasing its affinity for L-methionine. Can bind NADP (in vitro). The sequence is that of Methionine adenosyltransferase 2 subunit beta (MAT2B) from Pongo abelii (Sumatran orangutan).